A 393-amino-acid chain; its full sequence is Stearoyl-[acyl-carrier-protein] 9-desaturase, chloroplastic (393 aa).

Residues 1-30 (MALNFNSPTFQSIKTTRRPCSPLRSPRVFM) constitute a chloroplast transit peptide. Fe cation contacts are provided by E135, E173, H176, E226, E259, and H262.

Belongs to the fatty acid desaturase type 2 family. In terms of assembly, homodimer. Fe(2+) is required as a cofactor.

Its subcellular location is the plastid. It is found in the chloroplast. It catalyses the reaction octadecanoyl-[ACP] + 2 reduced [2Fe-2S]-[ferredoxin] + O2 + 2 H(+) = (9Z)-octadecenoyl-[ACP] + 2 oxidized [2Fe-2S]-[ferredoxin] + 2 H2O. Its pathway is lipid metabolism; fatty acid metabolism. Functionally, converts stearoyl-ACP to oleoyl-ACP by introduction of a cis double bond between carbons 9 and 10 of the acyl chain. In Solanum commersonii (Commerson's wild potato), this protein is Stearoyl-[acyl-carrier-protein] 9-desaturase, chloroplastic.